A 181-amino-acid chain; its full sequence is Alkyl hydroperoxide reductase AhpD (181 aa).

Cys-131 acts as the Proton donor in catalysis. The cysteines at positions 131 and 134 are disulfide-linked. Cys-134 acts as the Cysteine sulfenic acid (-SOH) intermediate in catalysis.

Belongs to the AhpD family.

The catalysed reaction is N(6)-[(R)-dihydrolipoyl]-L-lysyl-[lipoyl-carrier protein] + a hydroperoxide = N(6)-[(R)-lipoyl]-L-lysyl-[lipoyl-carrier protein] + an alcohol + H2O. Antioxidant protein with alkyl hydroperoxidase activity. Required for the reduction of the AhpC active site cysteine residues and for the regeneration of the AhpC enzyme activity. This Rhodopseudomonas palustris (strain BisB18) protein is Alkyl hydroperoxide reductase AhpD.